Here is a 349-residue protein sequence, read N- to C-terminus: tRNA pseudouridine synthase D (349 aa).

Phenylalanine 27 is a binding site for substrate. The active-site Nucleophile is the aspartate 80. A substrate-binding site is contributed by asparagine 129. The 149-residue stretch at 155–303 (GVPNYFGAQR…VEAARRAMLL (149 aa)) folds into the TRUD domain. Phenylalanine 329 lines the substrate pocket.

Belongs to the pseudouridine synthase TruD family.

The catalysed reaction is uridine(13) in tRNA = pseudouridine(13) in tRNA. Its function is as follows. Responsible for synthesis of pseudouridine from uracil-13 in transfer RNAs. In Escherichia fergusonii (strain ATCC 35469 / DSM 13698 / CCUG 18766 / IAM 14443 / JCM 21226 / LMG 7866 / NBRC 102419 / NCTC 12128 / CDC 0568-73), this protein is tRNA pseudouridine synthase D.